The chain runs to 278 residues: Thiazole synthase (278 aa).

Lys-107 acts as the Schiff-base intermediate with DXP in catalysis. 1-deoxy-D-xylulose 5-phosphate contacts are provided by residues Gly-168, 194–195 (AG), and 216–217 (AS).

The protein belongs to the ThiG family. As to quaternary structure, homotetramer. Forms heterodimers with either ThiH or ThiS.

Its subcellular location is the cytoplasm. It catalyses the reaction [ThiS sulfur-carrier protein]-C-terminal-Gly-aminoethanethioate + 2-iminoacetate + 1-deoxy-D-xylulose 5-phosphate = [ThiS sulfur-carrier protein]-C-terminal Gly-Gly + 2-[(2R,5Z)-2-carboxy-4-methylthiazol-5(2H)-ylidene]ethyl phosphate + 2 H2O + H(+). Its pathway is cofactor biosynthesis; thiamine diphosphate biosynthesis. Its function is as follows. Catalyzes the rearrangement of 1-deoxy-D-xylulose 5-phosphate (DXP) to produce the thiazole phosphate moiety of thiamine. Sulfur is provided by the thiocarboxylate moiety of the carrier protein ThiS. In vitro, sulfur can be provided by H(2)S. This chain is Thiazole synthase, found in Corynebacterium jeikeium (strain K411).